We begin with the raw amino-acid sequence, 195 residues long: MRVAEVVRNTSETQIRVKLDLDGTGRQKLATGVPFLDHMLDQIARHGLVDLEVEAHGDTHIDDHHTVEDVGITLGQAVAKAIGDKKGIRRYGHAYVPLDEALSRVVIDFSGRPGLEFHVPFTRARIGTFDVDLSIEFFRGFVNHAGVTLHIDNLRGINAHHQLETVFKAFGRALRAAVELDERAAGQIPSTKGSL.

This sequence belongs to the imidazoleglycerol-phosphate dehydratase family.

It is found in the cytoplasm. It catalyses the reaction D-erythro-1-(imidazol-4-yl)glycerol 3-phosphate = 3-(imidazol-4-yl)-2-oxopropyl phosphate + H2O. It functions in the pathway amino-acid biosynthesis; L-histidine biosynthesis; L-histidine from 5-phospho-alpha-D-ribose 1-diphosphate: step 6/9. This chain is Imidazoleglycerol-phosphate dehydratase, found in Burkholderia multivorans (strain ATCC 17616 / 249).